Consider the following 307-residue polypeptide: MWRMSHSLPSGMSRYAFSPQDTDFTSSYPGPSAMNHRGGRGGGYNDFSGGGSAMGSMCNMAPAISTNSVNSGGGDCGDNQGCNGTNLIVNYLPQDMTDRELYALFRTCGPINTCRIMKDYKTGYSFGYAFVDFASEIDAQNAIKSLNGVTVRNKRLKVSYARPGGESIKDTNLYVTNLPRTITDDELEKIFGKYGNIVQKNILRDKLTGKPRGVAFVRFNKREEAQEAISALNNVIPEGASQPLTVRLAEEHGKMKAHHFMNQLGMGPPAAPIPAAGPGYNSMVHRGRHNKNRNQKPHPYHNPQKFI.

2 RRM domains span residues 85 to 163 (TNLI…YARP) and 171 to 251 (TNLY…LAEE). Residues 285–299 (HRGRHNKNRNQKPHP) are compositionally biased toward basic residues. The segment at 285-307 (HRGRHNKNRNQKPHPYHNPQKFI) is disordered.

Its subcellular location is the nucleus. Its function is as follows. Unknown; apparently not involved in somatic sex determination. The chain is Sex-lethal homolog (SXL) from Chrysomya rufifacies (Hairy maggot blowfly).